Here is a 271-residue protein sequence, read N- to C-terminus: Formamidopyrimidine-DNA glycosylase (271 aa).

Pro-2 serves as the catalytic Schiff-base intermediate with DNA. Glu-3 acts as the Proton donor in catalysis. Lys-58 acts as the Proton donor; for beta-elimination activity in catalysis. Residues His-92, Arg-111, and Arg-152 each contribute to the DNA site. An FPG-type zinc finger spans residues 237-271 (FVYGRQQQPCKQCGSLLRQTTIRQRTTVWCGHCQG). The Proton donor; for delta-elimination activity role is filled by Arg-261.

This sequence belongs to the FPG family. Monomer. The cofactor is Zn(2+).

The enzyme catalyses Hydrolysis of DNA containing ring-opened 7-methylguanine residues, releasing 2,6-diamino-4-hydroxy-5-(N-methyl)formamidopyrimidine.. It catalyses the reaction 2'-deoxyribonucleotide-(2'-deoxyribose 5'-phosphate)-2'-deoxyribonucleotide-DNA = a 3'-end 2'-deoxyribonucleotide-(2,3-dehydro-2,3-deoxyribose 5'-phosphate)-DNA + a 5'-end 5'-phospho-2'-deoxyribonucleoside-DNA + H(+). Its function is as follows. Involved in base excision repair of DNA damaged by oxidation or by mutagenic agents. Acts as a DNA glycosylase that recognizes and removes damaged bases. Has a preference for oxidized purines, such as 7,8-dihydro-8-oxoguanine (8-oxoG). Has AP (apurinic/apyrimidinic) lyase activity and introduces nicks in the DNA strand. Cleaves the DNA backbone by beta-delta elimination to generate a single-strand break at the site of the removed base with both 3'- and 5'-phosphates. The chain is Formamidopyrimidine-DNA glycosylase (mutM1) from Xylella fastidiosa (strain 9a5c).